The primary structure comprises 299 residues: Protoheme IX farnesyltransferase (299 aa).

The next 9 helical transmembrane spans lie at 17–37 (VVAL…PAPY), 41–61 (GLLV…AAVF), 91–111 (ALMW…LFVN), 113–133 (ITMV…TLYL), 141–161 (IVIG…AVSG), 168–188 (ACLL…ALAI), 207–227 (GLAY…LVSL), 228–248 (LPYL…ALGI), and 266–286 (IAWC…VTLL).

The protein belongs to the UbiA prenyltransferase family. Protoheme IX farnesyltransferase subfamily.

It is found in the cell inner membrane. It carries out the reaction heme b + (2E,6E)-farnesyl diphosphate + H2O = Fe(II)-heme o + diphosphate. Its pathway is porphyrin-containing compound metabolism; heme O biosynthesis; heme O from protoheme: step 1/1. Functionally, converts heme B (protoheme IX) to heme O by substitution of the vinyl group on carbon 2 of heme B porphyrin ring with a hydroxyethyl farnesyl side group. The polypeptide is Protoheme IX farnesyltransferase (Ruthia magnifica subsp. Calyptogena magnifica).